Here is a 463-residue protein sequence, read N- to C-terminus: Argininosuccinate lyase (463 aa).

This sequence belongs to the lyase 1 family. Argininosuccinate lyase subfamily.

It is found in the cytoplasm. It carries out the reaction 2-(N(omega)-L-arginino)succinate = fumarate + L-arginine. It functions in the pathway amino-acid biosynthesis; L-arginine biosynthesis; L-arginine from L-ornithine and carbamoyl phosphate: step 3/3. In Bradyrhizobium sp. (strain BTAi1 / ATCC BAA-1182), this protein is Argininosuccinate lyase.